Here is a 135-residue protein sequence, read N- to C-terminus: ATP synthase epsilon chain (135 aa).

The tract at residues 91–122 is disordered; the sequence is EAQKQLSEAEQAWSKFDGQPNSPDKIKAQQAF.

It belongs to the ATPase epsilon chain family. F-type ATPases have 2 components, CF(1) - the catalytic core - and CF(0) - the membrane proton channel. CF(1) has five subunits: alpha(3), beta(3), gamma(1), delta(1), epsilon(1). CF(0) has three main subunits: a, b and c.

The protein resides in the cellular thylakoid membrane. Produces ATP from ADP in the presence of a proton gradient across the membrane. In Synechococcus sp. (strain RCC307), this protein is ATP synthase epsilon chain.